A 396-amino-acid chain; its full sequence is uncharacterized protein (396 aa).

The next 11 helical transmembrane spans lie at 7–27 (SDDV…SIGL), 36–56 (AVSG…VGVL), 62–82 (VYDT…LFQI), 94–114 (LLFI…LAFF), 159–179 (VVAD…IPAL), 218–238 (IAFN…VSGY), 250–270 (GTLG…IFLF), 285–305 (TFLI…RLIV), 310–330 (LILL…LAAG), 340–360 (ILLA…MAIA), and 367–387 (VAPI…VGTF).

It localises to the cell membrane. This is an uncharacterized protein from Bacillus subtilis (strain 168).